The following is a 187-amino-acid chain: Endoribonuclease YbeY (187 aa).

H151, H155, and H161 together coordinate Zn(2+).

The protein belongs to the endoribonuclease YbeY family. The cofactor is Zn(2+).

It localises to the cytoplasm. Its function is as follows. Single strand-specific metallo-endoribonuclease involved in late-stage 70S ribosome quality control and in maturation of the 3' terminus of the 16S rRNA. In Prochlorococcus marinus (strain MIT 9313), this protein is Endoribonuclease YbeY.